The following is a 423-amino-acid chain: Imidazolonepropionase (423 aa).

Histidine 78 and histidine 80 together coordinate Fe(3+). Zn(2+) contacts are provided by histidine 78 and histidine 80. 4-imidazolone-5-propanoate is bound by residues arginine 87, tyrosine 150, and histidine 183. Position 150 (tyrosine 150) interacts with N-formimidoyl-L-glutamate. Histidine 247 contacts Fe(3+). Histidine 247 provides a ligand contact to Zn(2+). Glutamate 250 contributes to the 4-imidazolone-5-propanoate binding site. Aspartate 322 provides a ligand contact to Fe(3+). Aspartate 322 contacts Zn(2+). N-formimidoyl-L-glutamate-binding residues include asparagine 324 and glycine 326. Serine 327 contributes to the 4-imidazolone-5-propanoate binding site.

Belongs to the metallo-dependent hydrolases superfamily. HutI family. It depends on Zn(2+) as a cofactor. The cofactor is Fe(3+).

It localises to the cytoplasm. It catalyses the reaction 4-imidazolone-5-propanoate + H2O = N-formimidoyl-L-glutamate. Its pathway is amino-acid degradation; L-histidine degradation into L-glutamate; N-formimidoyl-L-glutamate from L-histidine: step 3/3. In terms of biological role, catalyzes the hydrolytic cleavage of the carbon-nitrogen bond in imidazolone-5-propanoate to yield N-formimidoyl-L-glutamate. It is the third step in the universal histidine degradation pathway. The sequence is that of Imidazolonepropionase from Bacillus cereus (strain ATCC 14579 / DSM 31 / CCUG 7414 / JCM 2152 / NBRC 15305 / NCIMB 9373 / NCTC 2599 / NRRL B-3711).